Consider the following 442-residue polypeptide: Histidinol dehydrogenase (442 aa).

The NAD(+) site is built by Tyr-136, Gln-197, and Asn-220. Residues Ser-243, Gln-265, and His-268 each contribute to the substrate site. Residues Gln-265 and His-268 each contribute to the Zn(2+) site. Active-site proton acceptor residues include Glu-333 and His-334. 4 residues coordinate substrate: His-334, Asp-367, Glu-421, and His-426. Asp-367 is a Zn(2+) binding site. Zn(2+) is bound at residue His-426.

It belongs to the histidinol dehydrogenase family. Zn(2+) serves as cofactor.

It carries out the reaction L-histidinol + 2 NAD(+) + H2O = L-histidine + 2 NADH + 3 H(+). It functions in the pathway amino-acid biosynthesis; L-histidine biosynthesis; L-histidine from 5-phospho-alpha-D-ribose 1-diphosphate: step 9/9. Catalyzes the sequential NAD-dependent oxidations of L-histidinol to L-histidinaldehyde and then to L-histidine. The sequence is that of Histidinol dehydrogenase from Pseudomonas fluorescens (strain ATCC BAA-477 / NRRL B-23932 / Pf-5).